The chain runs to 468 residues: ATP synthase subunit beta (468 aa).

Residue 155–162 (GGAGVGKT) coordinates ATP.

Belongs to the ATPase alpha/beta chains family. In terms of assembly, F-type ATPases have 2 components, CF(1) - the catalytic core - and CF(0) - the membrane proton channel. CF(1) has five subunits: alpha(3), beta(3), gamma(1), delta(1), epsilon(1). CF(0) has three main subunits: a(1), b(2) and c(9-12). The alpha and beta chains form an alternating ring which encloses part of the gamma chain. CF(1) is attached to CF(0) by a central stalk formed by the gamma and epsilon chains, while a peripheral stalk is formed by the delta and b chains.

It is found in the cell membrane. The enzyme catalyses ATP + H2O + 4 H(+)(in) = ADP + phosphate + 5 H(+)(out). In terms of biological role, produces ATP from ADP in the presence of a proton gradient across the membrane. The catalytic sites are hosted primarily by the beta subunits. The polypeptide is ATP synthase subunit beta (Streptococcus agalactiae serotype Ia (strain ATCC 27591 / A909 / CDC SS700)).